We begin with the raw amino-acid sequence, 375 residues long: MMSKPHHATLESIKYTPGSLRLLDQRKLPLETVFDDVLTVEDIWSAIKEMRVRGAPAIAVSAALGIAVATQRKAANGELKSGREVQTFLLTSCDFVMTSRPTAVNLFNCLRDLKAQVDKLDPTKAAAEVAQAFVELAEAVYTNDVAFNEGIMRHGAAHILAAAKAEGRDKVSILTICNTGALATSRYGTALGVVRQLFYDGKLERVYACETRPWNQGARLTVYECVQEDIPCTLICDGAASSLMLNRKIDAVVVGADRICQNGDTANKIGTYNLAVSAKFHGVKLYVAAPTTTLDVKTASGNHVEIEEREPTEITTNLVTKQRVVADGPHLSIWNPVFDITPSELITGGIITEKGVQAPAASAPYYDIASIIAQA.

Residue Asp-257 is the Proton donor of the active site.

It belongs to the eIF-2B alpha/beta/delta subunits family. MtnA subfamily.

Its subcellular location is the cytoplasm. It is found in the nucleus. It carries out the reaction 5-(methylsulfanyl)-alpha-D-ribose 1-phosphate = 5-(methylsulfanyl)-D-ribulose 1-phosphate. The protein operates within amino-acid biosynthesis; L-methionine biosynthesis via salvage pathway; L-methionine from S-methyl-5-thio-alpha-D-ribose 1-phosphate: step 1/6. In terms of biological role, catalyzes the interconversion of methylthioribose-1-phosphate (MTR-1-P) into methylthioribulose-1-phosphate (MTRu-1-P). The protein is Methylthioribose-1-phosphate isomerase of Leishmania major.